Reading from the N-terminus, the 149-residue chain is Large ribosomal subunit protein uL13 (149 aa).

This sequence belongs to the universal ribosomal protein uL13 family. Part of the 50S ribosomal subunit.

This protein is one of the early assembly proteins of the 50S ribosomal subunit, although it is not seen to bind rRNA by itself. It is important during the early stages of 50S assembly. The protein is Large ribosomal subunit protein uL13 of Chlorobium chlorochromatii (strain CaD3).